The sequence spans 341 residues: Phenylalanine--tRNA ligase alpha subunit (341 aa).

A Mg(2+)-binding site is contributed by glutamate 256.

Belongs to the class-II aminoacyl-tRNA synthetase family. Phe-tRNA synthetase alpha subunit type 1 subfamily. As to quaternary structure, tetramer of two alpha and two beta subunits. Requires Mg(2+) as cofactor.

Its subcellular location is the cytoplasm. It carries out the reaction tRNA(Phe) + L-phenylalanine + ATP = L-phenylalanyl-tRNA(Phe) + AMP + diphosphate + H(+). The protein is Phenylalanine--tRNA ligase alpha subunit of Clostridium perfringens (strain 13 / Type A).